Consider the following 760-residue polypeptide: Transglutaminase-activating metalloprotease (760 aa).

The N-terminal stretch at 1 to 33 (MRPTPQRRAVATGALVAVTAMLAVGVQTTSANA) is a signal peptide. Disordered regions lie at residues 32 to 59 (NAGQ…PVKL) and 228 to 265 (KQGT…KTYN). A propeptide spanning residues 34-229 (GQDKAAHPAP…KLFEFQGVKQ (196 aa)) is cleaved from the precursor. Residues 228–257 (KQGTGNSQHSGQVQIGTTKSGSSYQMNDTT) are compositionally biased toward polar residues. His366 lines the Zn(2+) pocket. Glu367 is a catalytic residue. His370 and Glu390 together coordinate Zn(2+). The active-site Proton donor is the His454. The P/Homo B domain occupies 640–760 (TVNTTGGGSV…GTIDKWRLTF (121 aa)).

This sequence belongs to the peptidase M4 family. Zn(2+) serves as cofactor.

The protein localises to the secreted. Its function is as follows. Cleaves the N-terminal propeptide of transglutaminase thus activating it. In Streptomyces mobaraensis (Streptoverticillium mobaraense), this protein is Transglutaminase-activating metalloprotease.